Reading from the N-terminus, the 23-residue chain is NADP phosphatase 2 (23 aa).

Homodimer.

Its subcellular location is the cytoplasm. This Arthrobacter sp. (strain KM) protein is NADP phosphatase 2.